The sequence spans 522 residues: 5,6-dihydroxyindole-2-carboxylic acid oxidase (522 aa).

Residues 1-21 (MLRTSCGGMLLLVHALGLVRA) form the signal peptide. Topologically, residues 22-470 (QFPRACVTPE…RPLTPTQIVT (449 aa)) are lumenal, melanosome. 5 cysteine pairs are disulfide-bonded: Cys-27/Cys-38, Cys-39/Cys-59, Cys-50/Cys-89, Cys-91/Cys-100, and Cys-103/Cys-112. Asn-164 and Asn-171 each carry an N-linked (GlcNAc...) asparagine glycan. His-182, His-205, and His-214 together coordinate Zn(2+). 2 disulfide bridges follow: Cys-248/Cys-251 and Cys-280/Cys-293. N-linked (GlcNAc...) asparagine glycosylation occurs at Asn-294. The Zn(2+) site is built by His-367 and His-371. Asn-375 is a glycosylation site (N-linked (GlcNAc...) asparagine). His-394 is a Zn(2+) binding site. A helical transmembrane segment spans residues 471-491 (VAVVAALLLVAIIFAASTCVV). Residues 492 to 522 (HLRGNRTEGRQPLLGDQYQRYEDHNKTQSVV) lie on the Cytoplasmic side of the membrane.

It belongs to the tyrosinase family. Cu(2+) serves as cofactor. Zn(2+) is required as a cofactor.

The protein resides in the melanosome membrane. The catalysed reaction is 2 5,6-dihydroxyindole-2-carboxylate + O2 = 2 indole-5,6-quinone-2-carboxylate + 2 H2O. It participates in pigment biosynthesis; melanin biosynthesis. Its function is as follows. Plays a role in melanin biosynthesis. Catalyzes the oxidation of 5,6-dihydroxyindole-2-carboxylic acid (DHICA) into indole-5,6-quinone-2-carboxylic acid. May regulate or influence the type of melanin synthesized. Also to a lower extent, capable of hydroxylating tyrosine and producing melanin. The chain is 5,6-dihydroxyindole-2-carboxylic acid oxidase (tyrp1) from Carassius auratus (Goldfish).